Consider the following 400-residue polypeptide: MASEKPLAAVTCTAPVNIAVIKYWGKRDEELVLPINSSLSVTLHQDQLKTTTTAVISKDFTEDRIWLNGREEDVGQPRLQACLREIRCLARKRRNSRDGDPLPSSLSCKVHVASVNNFPTAAGLASSAAGYACLAYTLARVYGVESDLSEVARRGSGSACRSLYGGFVEWQMGEQADGKDSIARQVAPESHWPELRVLILVVSAEKKLTGSTVGMRASVETSPLLRFRAESVVPARMAEMARCIRERDFPSFAQLTMKDSNQFHATCLDTFPPISYLNAISWRIIHLVHRFNAHHGDTKVAYTFDAGPNAVIFTLDDTVAEFVAAVWHGFPPGSNGDTFLKGLQVRPAPLSAELQAALAMEPTPGGVKYIIVTQVGPGPQILDDPCAHLLGPDGLPKPAA.

Alanine 2 carries the post-translational modification N-acetylalanine. (R)-5-diphosphomevalonate-binding positions include 23-26 and arginine 78; that span reads YWGK. Serine 96 is subject to Phosphoserine. Residues 156 to 161 and threonine 212 each bind (R)-5-diphosphomevalonate; that span reads SGSACR.

It belongs to the diphosphomevalonate decarboxylase family. As to quaternary structure, homodimer. Expressed in heart, skeletal muscle, lung, liver, brain, pancreas, kidney and placenta.

The protein resides in the cytoplasm. The catalysed reaction is (R)-5-diphosphomevalonate + ATP = isopentenyl diphosphate + ADP + phosphate + CO2. The protein operates within steroid biosynthesis; cholesterol biosynthesis. Its function is as follows. Catalyzes the ATP dependent decarboxylation of (R)-5-diphosphomevalonate to form isopentenyl diphosphate (IPP). Functions in the mevalonate (MVA) pathway leading to isopentenyl diphosphate (IPP), a key precursor for the biosynthesis of isoprenoids and sterol synthesis. The sequence is that of Diphosphomevalonate decarboxylase (MVD) from Homo sapiens (Human).